A 111-amino-acid polypeptide reads, in one-letter code: Nascent polypeptide-associated complex protein (111 aa).

The NAC-A/B domain maps to 3 to 72; it reads GMNPRQMKKL…EEVREVLEIS (70 aa).

Belongs to the NAC-alpha family. As to quaternary structure, homodimer. Interacts with the ribosome. Binds ribosomal RNA.

Contacts the emerging nascent chain on the ribosome. The protein is Nascent polypeptide-associated complex protein of Thermococcus kodakarensis (strain ATCC BAA-918 / JCM 12380 / KOD1) (Pyrococcus kodakaraensis (strain KOD1)).